The primary structure comprises 410 residues: MKHPIHVTSEIGELQTVLLKRPGKEVENLTPDYLQQLLFDDIPYLPIIQKEHDYFAQTLRNRGVEVLYLEKLAAEALVDKKLREEFVDRILKEGQADVNVAHQTLKEYLLSFSNEELIQKIMGGVRKNEIETSKKTHLYELMEDHYPFYLDPMPNLYFTRDPAASVGDGLTINKMREPARRRESLFMEYIIKYHPRFAKHNVPIWLDRDYKFPIEGGDELILNEETIAIGVSARTSAKAIERLAKNLFSRQNKIKKVLAIEIPKCRAFMHLDTVFTMVDYDKFTIHPAIQGPKGNMNIYILEKGSDEETLKITHRTSLMEALKEVLGLSELVLIPCGGGDVIASAREQWNDGSNTLAIAPGVVVTYDRNYVSNTLLREHGIEVIEVLSSELSRGRGGPRCMSMPIVRKDI.

The active-site Amidino-cysteine intermediate is cysteine 400.

The protein belongs to the arginine deiminase family.

The protein resides in the cytoplasm. The catalysed reaction is L-arginine + H2O = L-citrulline + NH4(+). Its pathway is amino-acid degradation; L-arginine degradation via ADI pathway; carbamoyl phosphate from L-arginine: step 1/2. The polypeptide is Arginine deiminase (Bacillus cereus (strain G9842)).